The sequence spans 330 residues: Phosphate acyltransferase (330 aa).

Belongs to the PlsX family. In terms of assembly, homodimer. Probably interacts with PlsY.

Its subcellular location is the cytoplasm. It catalyses the reaction a fatty acyl-[ACP] + phosphate = an acyl phosphate + holo-[ACP]. It participates in lipid metabolism; phospholipid metabolism. Catalyzes the reversible formation of acyl-phosphate (acyl-PO(4)) from acyl-[acyl-carrier-protein] (acyl-ACP). This enzyme utilizes acyl-ACP as fatty acyl donor, but not acyl-CoA. The polypeptide is Phosphate acyltransferase (Streptococcus pneumoniae (strain JJA)).